The primary structure comprises 459 residues: Cysteine--tRNA ligase (459 aa).

Residue Cys28 coordinates Zn(2+). The 'HIGH' region signature appears at 30–40 (VTVYDLCHFGH). The Zn(2+) site is built by Cys209, His234, and Glu238. The 'KMSKS' region signature appears at 266-270 (KMSKS). Lys269 contributes to the ATP binding site.

It belongs to the class-I aminoacyl-tRNA synthetase family. As to quaternary structure, monomer. It depends on Zn(2+) as a cofactor.

It localises to the cytoplasm. The enzyme catalyses tRNA(Cys) + L-cysteine + ATP = L-cysteinyl-tRNA(Cys) + AMP + diphosphate. The chain is Cysteine--tRNA ligase from Glaesserella parasuis serovar 5 (strain SH0165) (Haemophilus parasuis).